A 345-amino-acid polypeptide reads, in one-letter code: uncharacterized protein (345 aa).

The protein belongs to the transketolase family. Thiamine diphosphate serves as cofactor.

This is an uncharacterized protein from Sinorhizobium fredii (strain NBRC 101917 / NGR234).